We begin with the raw amino-acid sequence, 355 residues long: MTGVHEGTVLVTGGAGYIGSHTCVVLLEKGYDVVIVDNLCNSRVEAVHRIEKLTGKKVIFHQVDLLDEPALDKVFANQNISAVIHFAGLKAVGESVQVPLSYYKNNISGTINLIECMKKYNVRDFVFSSSATVYGDPTRPGGTIPIPESCPREGTSPYGRTKLFIENIIEDETKVNKSLNAALLRYFNPGGAHPSGELGEDPLGIPNNLLPYIAQVAVGRLDHLNVFGDDYPTSDGTPIRDYIHVCDLAEAHVAALDYLRQHFVSCRPWNLGSGTGSTVFQVLNAFSKAVGRDLPYKVTPRRAGDVVNLTANPTRANEELKWKTSRSIYEICVDTWRWQQKYPYGFDLTHTKTYK.

An NAD(+)-binding site is contributed by 8-39; that stretch reads TVLVTGGAGYIGSHTCVVLLEKGYDVVIVDNL.

This sequence belongs to the NAD(P)-dependent epimerase/dehydratase family. The cofactor is NAD(+).

It catalyses the reaction UDP-alpha-D-glucose = UDP-alpha-D-galactose. Its pathway is carbohydrate metabolism; galactose metabolism. Functionally, major UDP-glucose/-galactose 4-epimerase under glucose-rich conditions involved in protein galactosylation. This Schizosaccharomyces pombe (strain 972 / ATCC 24843) (Fission yeast) protein is UDP-glucose 4-epimerase uge1 (uge1).